Here is an 815-residue protein sequence, read N- to C-terminus: Bifunctional purine biosynthetic protein purD (815 aa).

The GARS stretch occupies residues 6–452; that stretch reads NILVIGSGSR…YRKDIGQKAL (447 aa). The ATP-grasp domain occupies 113–343; the sequence is KDFMARNNIP…LFEIVLACIE (231 aa). 139 to 200 contributes to the ATP binding site; sequence IESLNYKIVL…EEFLDGEECS (62 aa). 2 residues coordinate Mg(2+): E313 and N315. The interval 469 to 801 is AIRS; the sequence is VSYSESGVDI…KVYKIGKIIN (333 aa).

In the N-terminal section; belongs to the GARS family. This sequence in the C-terminal section; belongs to the AIR synthase family. Requires Mg(2+) as cofactor. It depends on Mn(2+) as a cofactor.

It is found in the cytoplasm. Its subcellular location is the cytosol. The enzyme catalyses 5-phospho-beta-D-ribosylamine + glycine + ATP = N(1)-(5-phospho-beta-D-ribosyl)glycinamide + ADP + phosphate + H(+). The catalysed reaction is 2-formamido-N(1)-(5-O-phospho-beta-D-ribosyl)acetamidine + ATP = 5-amino-1-(5-phospho-beta-D-ribosyl)imidazole + ADP + phosphate + H(+). Its pathway is purine metabolism; IMP biosynthesis via de novo pathway; 5-amino-1-(5-phospho-D-ribosyl)imidazole from N(2)-formyl-N(1)-(5-phospho-D-ribosyl)glycinamide: step 2/2. It functions in the pathway purine metabolism; IMP biosynthesis via de novo pathway; N(1)-(5-phospho-D-ribosyl)glycinamide from 5-phospho-alpha-D-ribose 1-diphosphate: step 2/2. Catalyzes the second and fifth step in the 'de novo' purine biosynthesis pathway; contains phosphoribosylamine--glycine ligase (GARS) and phosphoribosylformylglycinamidine cyclo-ligase (AIRS) activities. This chain is Bifunctional purine biosynthetic protein purD (purD), found in Dictyostelium discoideum (Social amoeba).